We begin with the raw amino-acid sequence, 149 residues long: 1,4-dihydroxy-2-naphthoyl-CoA hydrolase (149 aa).

Residue D19 is part of the active site.

It belongs to the 4-hydroxybenzoyl-CoA thioesterase family. DHNA-CoA hydrolase subfamily.

It carries out the reaction 1,4-dihydroxy-2-naphthoyl-CoA + H2O = 1,4-dihydroxy-2-naphthoate + CoA + H(+). It functions in the pathway cofactor biosynthesis; phylloquinone biosynthesis. It participates in quinol/quinone metabolism; 1,4-dihydroxy-2-naphthoate biosynthesis; 1,4-dihydroxy-2-naphthoate from chorismate: step 7/7. In terms of biological role, catalyzes the hydrolysis of 1,4-dihydroxy-2-naphthoyl-CoA (DHNA-CoA) to 1,4-dihydroxy-2-naphthoate (DHNA), a reaction involved in phylloquinone (vitamin K1) biosynthesis. In Synechococcus sp. (strain CC9605), this protein is 1,4-dihydroxy-2-naphthoyl-CoA hydrolase.